A 215-amino-acid chain; its full sequence is MEAAGCSYQFRIALLGDAGVGKTSLLRCYVAGARGAAEPDPEPTVGVEFYSRALQLPAGLRVKLQLWDTAGQECFRCITRSFYRNMVGVLLVFDVTNRESFEHIQAWHQEVVSTQGPDKVVFLLVGHKCDLNTRCVSSQEAEELAASLGMGFMETSAKSNCNVDLAFDTVTSAIEQALQQGDIKLDKDWAGVRLLHRSPNPRSSSRKQDSGTCQC.

GTP-binding residues include Gly19, Gly21, Lys22, Thr23, and Thr44. Positions 23, 44, and 68 each coordinate Mg(2+). Positions 71, 128, 130, 157, and 158 each coordinate GTP. The interval 196-215 (HRSPNPRSSSRKQDSGTCQC) is disordered. 2 S-geranylgeranyl cysteine lipidation sites follow: Cys213 and Cys215.

Belongs to the small GTPase superfamily. Rab family. It depends on Mg(2+) as a cofactor.

The protein localises to the membrane. The catalysed reaction is GTP + H2O = GDP + phosphate + H(+). Regulated by guanine nucleotide exchange factors (GEFs) which promote the exchange of bound GDP for free GTP. Regulated by GTPase activating proteins (GAPs) which increase the GTP hydrolysis activity. Inhibited by GDP dissociation inhibitors (GDIs). Its function is as follows. The small GTPases Rab are key regulators of intracellular membrane trafficking, from the formation of transport vesicles to their fusion with membranes. Rabs cycle between an inactive GDP-bound form and an active GTP-bound form that is able to recruit to membranes different sets of downstream effectors directly responsible for vesicle formation, movement, tethering and fusion. The physiological function of RAB42 remains undefined. The sequence is that of Ras-related protein Rab-42 from Mus musculus (Mouse).